The sequence spans 733 residues: Zinc finger protein indra (733 aa).

Residues 17–91 (VRCDHCGTSQ…RETVDRVQEQ (75 aa)) enclose the ZAD domain. Residues cysteine 19, cysteine 22, cysteine 64, and cysteine 67 each contribute to the Zn(2+) site. Basic and acidic residues predominate over residues 90–100 (EQPAKKTKVAE). The tract at residues 90-121 (EQPAKKTKVAEIEEPSTQESDKKAVKVPKKNT) is disordered. 3 positions are modified to phosphoserine: serine 109, serine 153, and serine 176. Threonine 180 and threonine 188 each carry phosphothreonine. C2H2-type zinc fingers lie at residues 228–251 (FQCP…QKEH) and 259–282 (YPCT…RDTH). Over residues 285–316 (TFESEAKTKAKESKEKEAKSGAKNKIDAKAKE) the composition is skewed to basic and acidic residues. Positions 285 to 336 (TFESEAKTKAKESKEKEAKSGAKNKIDAKAKETNAVSQRKKPKEKKSKEKKT) are disordered. C2H2-type zinc fingers lie at residues 416–439 (FQCE…KTVH) and 447–469 (FKCH…MTLH). Disordered stretches follow at residues 499–525 (IENT…FTNR) and 540–622 (AFKT…SSDV). Over residues 592 to 602 (SVSTTNGNSPA) the composition is skewed to polar residues. 3 positions are modified to phosphoserine: serine 600, serine 642, and serine 646. Position 647 is a phosphothreonine (threonine 647). C2H2-type zinc fingers lie at residues 653-676 (LSCD…EKKH) and 708-733 (LPCG…RKRH). Residue serine 654 is modified to Phosphoserine.

It belongs to the krueppel C2H2-type zinc-finger protein family.

It is found in the nucleus. Its subcellular location is the nucleolus. In terms of biological role, required for rDNA copy number maintenance and non-random sister chromatid segregation (NRSS) following unequal sister chromatid exchange. Binds ribosomal DNA (rDNA) preferentially binding to intergenic spacers (IGS) regions on both X and Y chromosomes. Essential for NRSS, a mechanism which contributes to the recovery and maintenance of inherently unstable rDNA copy numbers so that the integrity of the germline genome is upheld over generations and germline immortality is sustained. May be involved in transcriptional regulation. This is Zinc finger protein indra from Drosophila melanogaster (Fruit fly).